The following is a 155-amino-acid chain: uncharacterized protein (155 aa).

In terms of domain architecture, Macro spans 1-155 (MIVKYIKGDI…IVIVDWEPLL (155 aa)).

This is an uncharacterized protein from Escherichia coli (Bacteriophage T4).